We begin with the raw amino-acid sequence, 282 residues long: Lipoyl synthase (282 aa).

Residues Cys37, Cys42, Cys48, Cys63, Cys67, Cys70, and Ser275 each coordinate [4Fe-4S] cluster. Positions 49-264 (WSRGTATFMI…RLVGIEKGFR (216 aa)) constitute a Radical SAM core domain.

The protein belongs to the radical SAM superfamily. Lipoyl synthase family. The cofactor is [4Fe-4S] cluster.

The protein resides in the cytoplasm. The catalysed reaction is [[Fe-S] cluster scaffold protein carrying a second [4Fe-4S](2+) cluster] + N(6)-octanoyl-L-lysyl-[protein] + 2 oxidized [2Fe-2S]-[ferredoxin] + 2 S-adenosyl-L-methionine + 4 H(+) = [[Fe-S] cluster scaffold protein] + N(6)-[(R)-dihydrolipoyl]-L-lysyl-[protein] + 4 Fe(3+) + 2 hydrogen sulfide + 2 5'-deoxyadenosine + 2 L-methionine + 2 reduced [2Fe-2S]-[ferredoxin]. It participates in protein modification; protein lipoylation via endogenous pathway; protein N(6)-(lipoyl)lysine from octanoyl-[acyl-carrier-protein]: step 2/2. In terms of biological role, catalyzes the radical-mediated insertion of two sulfur atoms into the C-6 and C-8 positions of the octanoyl moiety bound to the lipoyl domains of lipoate-dependent enzymes, thereby converting the octanoylated domains into lipoylated derivatives. The sequence is that of Lipoyl synthase from Porphyromonas gingivalis (strain ATCC 33277 / DSM 20709 / CIP 103683 / JCM 12257 / NCTC 11834 / 2561).